The primary structure comprises 1630 residues: Merozoite surface protein 1 (1630 aa).

Residues 1–19 form the signal peptide; the sequence is MKIIFFLCSFLFFIINTQC. The tract at residues 60–113 is disordered; that stretch reads TKGASAQSGTSGTSGTSGPSGPSGTSPSSRSNTLPRSNTSSGASPPADASDSDA. The tripeptide SG(TP) repeat stretch occupies residues 67–84; that stretch reads SGTSGTSGTSGPSGPSGT. A compositionally biased stretch (low complexity) spans 67–88; that stretch reads SGTSGTSGTSGPSGPSGTSPSS. Residues 89 to 98 show a composition bias toward polar residues; the sequence is RSNTLPRSNT. Asparagine 97 carries N-linked (GlcNAc...) asparagine glycosylation. Positions 99–108 are enriched in low complexity; sequence SSGASPPADA. Asparagine 259 is a glycosylation site (N-linked (GlcNAc...) asparagine). Residues 680–755 form a disordered region; the sequence is KKNIKTEGQS…VPTPPAPVNN (76 aa). 2 stretches are compositionally biased toward polar residues: residues 685–695 and 702–713; these read TEGQSDNSEPS and GQATTKPGQQAG. The segment covering 721–732 has biased composition (low complexity); it reads VQAQAQEQKQAQ. 4 N-linked (GlcNAc...) asparagine glycosylation sites follow: asparagine 755, asparagine 759, asparagine 774, and asparagine 835. Residues 884 to 906 form a disordered region; sequence SMQPLSLTPQDKPEVSANDDTSH. Asparagine 911, asparagine 955, asparagine 1049, asparagine 1156, and asparagine 1165 each carry an N-linked (GlcNAc...) asparagine glycan. Residues 993–1107 form a required for binding to host erythrocyte cell membrane region; it reads QLSFDLYNKY…EESIQTEDNY (115 aa). Polar residues predominate over residues 1190-1203; the sequence is VSESGSDTLEQSQP. Positions 1190 to 1220 are disordered; sequence VSESGSDTLEQSQPKKPASTHVGAESNTITT. Asparagine 1436 and asparagine 1517 each carry an N-linked (GlcNAc...) asparagine glycan. EGF-like domains lie at 1521-1561 and 1562-1610; these read HQCV…VENP and NPTC…FCSS. 6 disulfides stabilise this stretch: cysteine 1523-cysteine 1534, cysteine 1528-cysteine 1544, cysteine 1546-cysteine 1557, cysteine 1565-cysteine 1578, cysteine 1572-cysteine 1592, and cysteine 1594-cysteine 1608. Serine 1609 is lipidated: GPI-anchor amidated serine. Positions 1610 to 1630 are cleaved as a propeptide — removed in mature form; that stretch reads SSNFLGISFLLILMLILYSFI.

As to quaternary structure, forms a complex composed of subunits p83, p30, p38, and p42 which remain non-covalently associated; the complex is formed at the merozoite surface prior to egress from host erythrocytes. Forms a complex composed of processed MSP1 subunits, MSP6 subunit p36 and MSP7; the complex is formed at the merozoite surface prior to egress from host erythrocytes. Within the complex, interacts (via subunit p38) with MSP6 subunit p36 and (via subunits p83, p30 and p38) with MSP7 (via subunit p22). Forms a complex composed of MSP1, MSP6, DBLMSP1 and DBLMSP2. Within the complex, interacts (via subunit p38) with DBLMSP1 and DBLMSP2. Forms a complex composed of MSP1, and rhoptry proteins RhopH3, RAP1 and CLAG9/RhopH3. Within the complex, interacts (via subunits p42 and p19) with RhopH3 (via C-terminus). Forms a complex composed of MSP1, MSP6, MSP7, MSP9 and MSP3; within the complex, MSP6 and MSP9 mediate the binding to the host erythrocyte. Interacts (via subunits p19 and p42) with MSP9; the interaction is direct; MSP1 subunits p19 or p42, and MSP9 form a co-ligand complex that interacts with host SLC4A1/Band 3 protein. May interact with PFD6. Interacts with host spectrin. In terms of assembly, interacts with host glycophorin GYPA in a sialic acid-independent manner. Interacts with host proinflammatory cytokine S100P; the interaction blocks S100P inflammatory and chemotactic activities. As to quaternary structure, interacts with host SLC4A1/Band 3 (via 5ABC region) on the host erythrocyte surface in a sialic acid-independent manner. The p190 precursor is cleaved by SUB1 prior to merozoite egress into 4 subunits p83, p30, p38, and p42 which remain non-covalently associated. SUB1-mediated proteolytic cleavage occurs in an orderly manner; the first cleavage occurs at the p83/p30 site, followed by cleavage at the p30/p38 site, the last cleavage occurs at the p38/p42 site. The order of cleavage is essential for parasite viability. SUB1-mediated processing is essential for merozoite egress. In a second processing step during erythrocyte invasion, p42 is cleaved by SUB2 into p33 and p19; the latter remains attached to the merozoite surface via its GPI-anchor and stays on the surface during the subsequent ring stage.

Its subcellular location is the cell membrane. The protein resides in the secreted. It localises to the vacuole membrane. Functionally, during the asexual blood stage, involved in merozoite egress from host erythrocytes possibly via its interaction with the host cytoskeleton protein spectrin resulting in the destabilization of the host cytoskeleton and thus leading to erythrocyte cell membrane rupture. Involved in the binding to host erythrocytes and is required for host erythrocyte invasion. Its function is as follows. By binding to host proinflammatory cytokine S100P may interfere with host immune responses. Involved in merozoite invasion of host erythrocytes. May play a role in the biogenesis and/or function of the food vacuole during the intraerythrocytic development. The protein is Merozoite surface protein 1 of Plasmodium falciparum (isolate K1 / Thailand).